Consider the following 422-residue polypeptide: AP-1 complex subunit mu-1-I (422 aa).

One can recognise an MHD domain in the interval 167–420; the sequence is KNEVFLDVIE…ITQNGEYEMR (254 aa).

The protein belongs to the adaptor complexes medium subunit family. In terms of assembly, adaptor protein complex 1 (AP-1) is a heterotetramer composed of two large adaptins (gamma- and beta'-type subunits), a medium adaptin (mu-type subunit AP47) and a small adaptin (sigma-type subunit AP19). Interacts (via N-terminus) with kvs-4. In terms of tissue distribution, expressed in the cholinergic motor neuron DA9.

It localises to the golgi apparatus. It is found in the cytoplasmic vesicle. The protein resides in the clathrin-coated vesicle membrane. Its subcellular location is the cell projection. The protein localises to the dendrite. Component of the adaptor complexes which link clathrin to receptors in coated vesicles. Clathrin-associated protein complexes are believed to interact with the cytoplasmic tails of membrane proteins, leading to their selection and concentration. Required for many aspects of development and behavior, including negative regulation of vulval differentiation. Required for the dendritic localization of potassium channel kvs-4 in the cholinergic motor neuron DA9. This is AP-1 complex subunit mu-1-I (unc-101) from Caenorhabditis elegans.